The primary structure comprises 441 residues: Heat shock factor protein 4 (441 aa).

The DNA-binding element occupies 17–121 (NVPAFLTKLW…EHLLEHIKRK (105 aa)). Residues 130–205 (TKVRQEDLSK…QMQSNSPSTV (76 aa)) are hydrophobic repeat HR-A/B.

It belongs to the HSF family. As to expression, predominantly expressed in the eye.

Its subcellular location is the nucleus. Its function is as follows. Heat-shock transcription factor that specifically binds heat shock promoter elements (HSE). Required for denucleation and organelle rupture and degradation that occur during eye lens terminal differentiation, when fiber cells that compose the lens degrade all membrane-bound organelles in order to provide lens with transparency to allow the passage of light. In this process, may regulate denucleation of lens fiber cells in part by activating dnase1l1l and dnase2b transcription. May be involved in DNA repair through the transcriptional regulation of rad51. May up-regulate TP53 protein in lens fiber cells, possibly through protein stabilization. In the eye lens, controls the expression of alpha-crystallin B chain/CRYAB and consequently may be involved in the regulation of lysosomal acidification. This is Heat shock factor protein 4 from Danio rerio (Zebrafish).